Consider the following 373-residue polypeptide: Alpha-ketoglutarate dependent kainoid synthase (373 aa).

One can recognise a Fe2OG dioxygenase domain in the interval 204–320; it reads TINSKKMFFT…RSSLITFYEP (117 aa). The Fe cation site is built by H235, D237, and H296. R311 is a binding site for 2-oxoglutarate.

The protein belongs to the iron/ascorbate-dependent oxidoreductase family. Fe(2+) is required as a cofactor.

It catalyses the reaction N-(7'-carboxy-7'-demethylgeranyl)-L-glutamate + 2-oxoglutarate + O2 = isodomoate A + succinate + CO2 + H2O. The catalysed reaction is N-geranyl-L-glutamate + 2-oxoglutarate + O2 = dainate A + succinate + CO2 + H2O. The protein operates within secondary metabolite biosynthesis. Its function is as follows. Iron/ascorbate-dependent oxidoreductase: part of the gene cluster that mediates the biosynthesis of domoic acid (DA) and derivatives, natural products with neurochemical activity acting as ionotropic glutamate receptor (iGluR) agonists, thus being neurotoxins causing amnesic shellfish poisoning (ASP). Catalyzes the conversion of 7'-N-carboxy-L-geranyl-L-glutamic acid (cNGG) to isodomoic acid-A. Also mediates the conversion of N-geranyl-L-glutamic acid (L-NGG) to dainic acid A. The chain is Alpha-ketoglutarate dependent kainoid synthase from Pseudo-nitzschia multiseries (Marine planktonic diatom).